Here is a 249-residue protein sequence, read N- to C-terminus: tRNA pseudouridine synthase A (249 aa).

The active-site Nucleophile is the Asp53. Tyr111 is a substrate binding site.

It belongs to the tRNA pseudouridine synthase TruA family. Homodimer.

It catalyses the reaction uridine(38/39/40) in tRNA = pseudouridine(38/39/40) in tRNA. Formation of pseudouridine at positions 38, 39 and 40 in the anticodon stem and loop of transfer RNAs. This Streptococcus pyogenes serotype M1 protein is tRNA pseudouridine synthase A.